Here is a 494-residue protein sequence, read N- to C-terminus: MKKMAFDSNKYLQLQRDHILERIHQFDGKLYMEFGGKMLEDYHAARVLPGYEPDNKIKLLKELKDQVEIVITINANNIEHSKARGDLGISYDQEVFRLIDTFHSLDIFVGSVVITQYNNQAAADAFRKQLEKNGITSYLHYPIKGYPTDINHIISPEGMGKNDYIKTSRNLVVVTAPGPGSGKLATCMSQMYHDQINGITSGYAKFETFPVWNLPLHHPVNLAYEAATADLDDVNMIDPFHLETYGKTAVNYNRDIEVFPVLNRTFERILSKSPYASPTDMGVNMVGFSIIDDDLAIEASKQEIIRRYYQTLVDFKAERVPETAIKKIELLMNDIGVSPEDRKVTVLARQKAEQTGAPALALELPNGEMVTGKTSDLFGPTAAVVINAIKKLAHISKETHLIEPEYVKPIQGLKVNHLGSQNPRLHSNEILIALAITAMNNDQAHLAMKELGNLKGSEAHSTVTLTEEDRNVLRKLGVNVTFDPVYQHDKLYRK.

Belongs to the UPF0371 family.

This chain is UPF0371 protein SUB1165, found in Streptococcus uberis (strain ATCC BAA-854 / 0140J).